Consider the following 83-residue polypeptide: MRTFTLIAILTCAVLVIFHAAAAEELEAQDVIETEALATLDEERLFECSFSCDIKKNGKPCKGSGEKKCSGGWRCKMNFCVKV.

An N-terminal signal peptide occupies residues 1-23 (MRTFTLIAILTCAVLVIFHAAAA). A propeptide spanning residues 24–44 (EELEAQDVIETEALATLDEER) is cleaved from the precursor. Disulfide bonds link Cys48–Cys61, Cys52–Cys75, and Cys69–Cys80.

The protein belongs to the neurotoxin 12 (Hwtx-2) family. 03 (juruin) subfamily. Contains 3 disulfide bonds. Two different connectivities are observed in similar proteins (C1-C3, C2-C5, C4-C6 or C1-C4, C2-C5, C3-C6). As to expression, expressed by the venom gland.

Its subcellular location is the secreted. Its function is as follows. Probable ion channel inhibitor. The sequence is that of U3-theraphotoxin-Cg1a from Chilobrachys guangxiensis (Chinese earth tiger tarantula).